Here is a 353-residue protein sequence, read N- to C-terminus: Neutral protease 2 homolog AO090001000135 (353 aa).

The signal sequence occupies residues 1-19 (MRFISVSSLLLALAPALNA). Positions 20–176 (VPVEVAGSAQ…TQAVKILERR (157 aa)) are excised as a propeptide. 2 disulfides stabilise this stretch: Cys182/Cys254 and Cys261/Cys279. His304 provides a ligand contact to Zn(2+). Residue Glu305 is part of the active site. Residues His308 and Asp319 each coordinate Zn(2+).

The protein belongs to the peptidase M35 family. It depends on Zn(2+) as a cofactor.

The protein resides in the secreted. It carries out the reaction Preferential cleavage of bonds with hydrophobic residues in P1'. Also 3-Asn-|-Gln-4 and 8-Gly-|-Ser-9 bonds in insulin B chain.. Functionally, secreted metalloproteinase that allows assimilation of proteinaceous substrates. Shows high activities on basic nuclear substrates such as histone and protamine. The polypeptide is Neutral protease 2 homolog AO090001000135 (Aspergillus oryzae (strain ATCC 42149 / RIB 40) (Yellow koji mold)).